Reading from the N-terminus, the 152-residue chain is Transcriptional regulator MraZ (152 aa).

2 consecutive SpoVT-AbrB domains span residues 5–52 (AHAI…PLCE) and 81–124 (ASEC…SETR).

It belongs to the MraZ family. In terms of assembly, forms oligomers.

It is found in the cytoplasm. It localises to the nucleoid. The polypeptide is Transcriptional regulator MraZ (Tolumonas auensis (strain DSM 9187 / NBRC 110442 / TA 4)).